Consider the following 166-residue polypeptide: Small ribosomal subunit protein uS5 (166 aa).

The S5 DRBM domain occupies phenylalanine 11–valine 74.

The protein belongs to the universal ribosomal protein uS5 family. As to quaternary structure, part of the 30S ribosomal subunit. Contacts proteins S4 and S8.

With S4 and S12 plays an important role in translational accuracy. In terms of biological role, located at the back of the 30S subunit body where it stabilizes the conformation of the head with respect to the body. This Alteromonas mediterranea (strain DSM 17117 / CIP 110805 / LMG 28347 / Deep ecotype) protein is Small ribosomal subunit protein uS5.